Consider the following 451-residue polypeptide: Chromosomal replication initiator protein DnaA 2 (451 aa).

Residues 1 to 68 are domain I, interacts with DnaA modulators; that stretch reads MQAWEEFLKA…QQKFINGNNK (68 aa). Residues 68–104 are domain II; sequence KRIKIHLSVANTPQRAKKTKTANKEKDFKAPFELTFD. Positions 105–326 are domain III, AAA+ region; the sequence is ELDPLCLFPY…KGLEALVLRL (222 aa). Residues Gly-156, Gly-158, Lys-159, and Thr-160 each contribute to the ATP site. Residues 327–451 are domain IV, binds dsDNA; the sequence is HLDAKHSITA…CHIILKKLQG (125 aa).

It belongs to the DnaA family. Oligomerizes as a right-handed, spiral filament on DNA at oriC.

Its subcellular location is the cytoplasm. Its function is as follows. Plays an essential role in the initiation and regulation of chromosomal replication. ATP-DnaA binds to the origin of replication (oriC) to initiate formation of the DNA replication initiation complex once per cell cycle. Binds the DnaA box (a 9 base pair repeat at the origin) and separates the double-stranded (ds)DNA. Forms a right-handed helical filament on oriC DNA; dsDNA binds to the exterior of the filament while single-stranded (ss)DNA is stabiized in the filament's interior. The ATP-DnaA-oriC complex binds and stabilizes one strand of the AT-rich DNA unwinding element (DUE), permitting loading of DNA polymerase. After initiation quickly degrades to an ADP-DnaA complex that is not apt for DNA replication. Binds acidic phospholipids. This Protochlamydia amoebophila (strain UWE25) protein is Chromosomal replication initiator protein DnaA 2.